A 494-amino-acid chain; its full sequence is Rhamnulokinase (494 aa).

An ATP-binding site is contributed by 18–22 (ASSGR). Residues glycine 87 and 242-244 (HDT) each bind substrate. Aspartate 243 functions as the Proton acceptor in the catalytic mechanism. ATP is bound at residue threonine 265. Asparagine 302 is a substrate binding site. Glutamine 310 is a binding site for ATP. Cysteine 360 and cysteine 377 are joined by a disulfide. Residue glycine 411 participates in ATP binding.

This sequence belongs to the rhamnulokinase family. Requires Mg(2+) as cofactor.

It carries out the reaction L-rhamnulose + ATP = L-rhamnulose 1-phosphate + ADP + H(+). The protein operates within carbohydrate degradation; L-rhamnose degradation; glycerone phosphate from L-rhamnose: step 2/3. Its function is as follows. Involved in the catabolism of L-rhamnose (6-deoxy-L-mannose). Catalyzes the transfer of the gamma-phosphate group from ATP to the 1-hydroxyl group of L-rhamnulose to yield L-rhamnulose 1-phosphate. The chain is Rhamnulokinase from Enterococcus faecalis (strain ATCC 700802 / V583).